A 165-amino-acid chain; its full sequence is MVDVHAQRKQIEKLISLNRVTKVVKGGRRFSFAAFMVVGDGEGHVGWGFGKANDASDAIKKSLTSARKNLRFVPIRKGTLPHEVIGCFKKAKVLIKPATHGTGVIAGGPVRAVMEALGVHDILSKSLGSNNSMNVVKATFKAFDLVLNAEKVAEMRGKTLKTLWG.

The region spanning 10–73 is the S5 DRBM domain; it reads QIEKLISLNR…TSARKNLRFV (64 aa).

Belongs to the universal ribosomal protein uS5 family. In terms of assembly, part of the 30S ribosomal subunit. Contacts proteins S4 and S8.

In terms of biological role, with S4 and S12 plays an important role in translational accuracy. Its function is as follows. Located at the back of the 30S subunit body where it stabilizes the conformation of the head with respect to the body. In Borreliella burgdorferi (strain ATCC 35210 / DSM 4680 / CIP 102532 / B31) (Borrelia burgdorferi), this protein is Small ribosomal subunit protein uS5.